The primary structure comprises 369 residues: Short chain dehydrogenase rstn4 (369 aa).

5 residues coordinate NADP(+): Lys88, Asp111, Asn138, Tyr234, and Lys238. Tyr234 (proton donor) is an active-site residue. The active-site Lowers pKa of active site Tyr is the Lys238.

This sequence belongs to the short-chain dehydrogenases/reductases (SDR) family.

It participates in antifungal biosynthesis. Functionally, short chain dehydrogenase; part of the gene cluster that mediates the biosynthesis of the tetrahydropyranyl antifungal agent restricticin that acts as an inhibitor of CYP51 and blocks the ergosterol biosynthesis. The highly reducing polyketide synthase rstn3, the short chain dehydrogenase rstn4, the cyclase rstn5, the FAD-dependent monooxygenase rstn6 and the enoylreductase rstn7 are required to generate the first stable intermediate desmethylrestrictinol. Rstn3 with rstn7 biosynthesize the first polyketide chain intermediate that is reduced by rstn4, followed by epoxidation by rstn6 before 6-endo cyclization via epoxide opening by rstn5 leads to desmethylrestrictinol. The methyltransferase rstn1 then catalyzes the C4 O-methylation of desmethylrestrictinol to produce restrictinol, and the nonribosomal peptide synthetase rstn8 catalyzes the C3 esterification of restrictinol with glycine that leads to restricticin. This is Short chain dehydrogenase rstn4 from Aspergillus nomiae NRRL (strain ATCC 15546 / NRRL 13137 / CBS 260.88 / M93).